The primary structure comprises 145 residues: UPF0735 ACT domain-containing protein CLL_A2896 (145 aa).

The ACT domain maps to 69–144 (TFNLIVKDQT…YVEKIEFVAM (76 aa)).

The protein belongs to the UPF0735 family.

The chain is UPF0735 ACT domain-containing protein CLL_A2896 from Clostridium botulinum (strain Eklund 17B / Type B).